Reading from the N-terminus, the 235-residue chain is Small ribosomal subunit protein uS3 (235 aa).

The region spanning 39–107 (VRLFLRKELF…PTQINIAEIR (69 aa)) is the KH type-2 domain.

Belongs to the universal ribosomal protein uS3 family. Part of the 30S ribosomal subunit. Forms a tight complex with proteins S10 and S14.

Its function is as follows. Binds the lower part of the 30S subunit head. Binds mRNA in the 70S ribosome, positioning it for translation. This is Small ribosomal subunit protein uS3 from Buchnera aphidicola subsp. Baizongia pistaciae (strain Bp).